The chain runs to 292 residues: Protoheme IX farnesyltransferase (292 aa).

The next 9 membrane-spanning stretches (helical) occupy residues 12-32, 43-63, 94-114, 115-135, 144-164, 169-189, 216-236, 239-259, and 267-287; these read ITWL…PQAS, LLRL…TAAL, LAFG…GVNL, LSAG…TPMK, VGAI…AGGL, WVLF…IAWM, IVIY…LGMS, LYLV…VRVA, and ARGV…LMLL.

The protein belongs to the UbiA prenyltransferase family. Protoheme IX farnesyltransferase subfamily.

It is found in the cell inner membrane. It catalyses the reaction heme b + (2E,6E)-farnesyl diphosphate + H2O = Fe(II)-heme o + diphosphate. The protein operates within porphyrin-containing compound metabolism; heme O biosynthesis; heme O from protoheme: step 1/1. Converts heme B (protoheme IX) to heme O by substitution of the vinyl group on carbon 2 of heme B porphyrin ring with a hydroxyethyl farnesyl side group. This is Protoheme IX farnesyltransferase from Solibacter usitatus (strain Ellin6076).